A 119-amino-acid chain; its full sequence is Large ribosomal subunit protein uL18 (119 aa).

Over residues 1 to 10 (MKKIKEAEQR) the composition is skewed to basic and acidic residues. A disordered region spans residues 1–20 (MKKIKEAEQRKLRRKKRIKD).

The protein belongs to the universal ribosomal protein uL18 family. Part of the 50S ribosomal subunit; part of the 5S rRNA/L5/L18/L25 subcomplex. Contacts the 5S and 23S rRNAs.

Functionally, this is one of the proteins that bind and probably mediate the attachment of the 5S RNA into the large ribosomal subunit, where it forms part of the central protuberance. The sequence is that of Large ribosomal subunit protein uL18 from Borreliella burgdorferi (strain ATCC 35210 / DSM 4680 / CIP 102532 / B31) (Borrelia burgdorferi).